A 154-amino-acid chain; its full sequence is Terephthalate 1,2-dioxygenase, terminal oxygenase component subunit beta 2 (154 aa).

It belongs to the bacterial ring-hydroxylating dioxygenase beta subunit family. In terms of assembly, heterotetramer composed of 2 alpha (TphA2I and TphA2II) and 2 beta (TphA3I and TphA3II) subunits. Part of a multicomponent enzyme system composed of a reductase (TphA1I or TphA1II) and a two-subunit oxygenase component (TphA2I or TphA2II and TphA3I or TphA3II). It depends on Fe cation as a cofactor.

It catalyses the reaction terephthalate + NADH + O2 + H(+) = (3S,4R)-3,4-dihydroxycyclohexa-1,5-diene-1,4-dicarboxylate + NAD(+). Inhibited by EDTA. Functionally, component of the terephthalate 1,2-dioxygenase multicomponent enzyme system which catalyzes the dioxygenation of terephthalate (TER/TPA) to 1,2-dihydroxy-3,5-cyclohexadiene-1,4-dicarboxylic acid (DCD). It can also use 2,5-dicarboxypyridine (PDC) and 1,4-napthalenedicarboxylic acid (NDC) as substrates, and preferentially uses NADPH which is the physiological electron donor. In Comamonas sp, this protein is Terephthalate 1,2-dioxygenase, terminal oxygenase component subunit beta 2 (tphA3II).